Consider the following 251-residue polypeptide: MRKNIVAGNWKMNKTLQEGLALAKELDAALKGRTISCDVIIGTPFIHLASIAAAIDTTRIGVAAENCADKESGAYTGEVSAAMVASTGARYVIIGHSERRAYYHETSPILMEKVKLALSNGLTPIFCVGEVLEEREAGKHFEVVARQVEEALFTLDQTDFAKLILAYEPVWAIGTGKTATADQAQEMHAHIRKSIAAKYGKEVANGCSILYGGSCNAANAKELFSRADVDGGLIGGASLSVDKFLPIIEAF.

9–11 (NWK) is a binding site for substrate. His-96 functions as the Electrophile in the catalytic mechanism. Residue Glu-168 is the Proton acceptor of the active site. Residues Gly-174, Ser-214, and 235-236 (GG) each bind substrate.

Belongs to the triosephosphate isomerase family. In terms of assembly, homodimer.

It is found in the cytoplasm. The catalysed reaction is D-glyceraldehyde 3-phosphate = dihydroxyacetone phosphate. Its pathway is carbohydrate biosynthesis; gluconeogenesis. The protein operates within carbohydrate degradation; glycolysis; D-glyceraldehyde 3-phosphate from glycerone phosphate: step 1/1. In terms of biological role, involved in the gluconeogenesis. Catalyzes stereospecifically the conversion of dihydroxyacetone phosphate (DHAP) to D-glyceraldehyde-3-phosphate (G3P). The chain is Triosephosphate isomerase from Porphyromonas gingivalis (strain ATCC 33277 / DSM 20709 / CIP 103683 / JCM 12257 / NCTC 11834 / 2561).